Consider the following 262-residue polypeptide: Zinc import ATP-binding protein ZnuC (262 aa).

Positions 5 to 220 (VSLEQLCVEF…PSYIALFGNA (216 aa)) constitute an ABC transporter domain. 37–44 (GPNGAGKS) contacts ATP. The disordered stretch occupies residues 236-262 (HHDLSGSPVSGDATSCSNHNHGHHHHD).

The protein belongs to the ABC transporter superfamily. Zinc importer (TC 3.A.1.15.5) family. As to quaternary structure, the complex is composed of two ATP-binding proteins (ZnuC), two transmembrane proteins (ZnuB) and a solute-binding protein (ZnuA).

Its subcellular location is the cell inner membrane. It catalyses the reaction Zn(2+)(out) + ATP(in) + H2O(in) = Zn(2+)(in) + ADP(in) + phosphate(in) + H(+)(in). In terms of biological role, part of the ABC transporter complex ZnuABC involved in zinc import. Responsible for energy coupling to the transport system. This Vibrio parahaemolyticus serotype O3:K6 (strain RIMD 2210633) protein is Zinc import ATP-binding protein ZnuC.